The chain runs to 720 residues: Phosphoribosylformylglycinamidine synthase subunit PurL (720 aa).

H47 is a catalytic residue. Residues Y50 and K89 each coordinate ATP. E91 is a Mg(2+) binding site. Substrate is bound by residues 92–95 and R114; that span reads SHNH. Catalysis depends on H93, which acts as the Proton acceptor. D115 contributes to the Mg(2+) binding site. Q238 is a binding site for substrate. D266 lines the Mg(2+) pocket. Substrate is bound at residue 310-312; the sequence is ESQ. ATP-binding residues include D488 and G525. N526 contacts Mg(2+). Residue S528 participates in substrate binding.

Belongs to the FGAMS family. Monomer. Part of the FGAM synthase complex composed of 1 PurL, 1 PurQ and 2 PurS subunits.

It is found in the cytoplasm. The catalysed reaction is N(2)-formyl-N(1)-(5-phospho-beta-D-ribosyl)glycinamide + L-glutamine + ATP + H2O = 2-formamido-N(1)-(5-O-phospho-beta-D-ribosyl)acetamidine + L-glutamate + ADP + phosphate + H(+). It functions in the pathway purine metabolism; IMP biosynthesis via de novo pathway; 5-amino-1-(5-phospho-D-ribosyl)imidazole from N(2)-formyl-N(1)-(5-phospho-D-ribosyl)glycinamide: step 1/2. Its function is as follows. Part of the phosphoribosylformylglycinamidine synthase complex involved in the purines biosynthetic pathway. Catalyzes the ATP-dependent conversion of formylglycinamide ribonucleotide (FGAR) and glutamine to yield formylglycinamidine ribonucleotide (FGAM) and glutamate. The FGAM synthase complex is composed of three subunits. PurQ produces an ammonia molecule by converting glutamine to glutamate. PurL transfers the ammonia molecule to FGAR to form FGAM in an ATP-dependent manner. PurS interacts with PurQ and PurL and is thought to assist in the transfer of the ammonia molecule from PurQ to PurL. The protein is Phosphoribosylformylglycinamidine synthase subunit PurL of Cereibacter sphaeroides (strain KD131 / KCTC 12085) (Rhodobacter sphaeroides).